We begin with the raw amino-acid sequence, 157 residues long: MPRRREVPKREILPDPKYGNVELSKFMNVIMEGGKKAVAERIIYGALDFIEKKNPDKDPLEAFTVAINNVKPMVEVKSRRVGGANYQVPVEVRPVRRLALSMRWIKEAARKRGEKSMALRLANELMEATEGRGGAMKKRDEVHRMAEANRAFSHFRF.

Belongs to the universal ribosomal protein uS7 family. Part of the 30S ribosomal subunit. Contacts proteins S9 and S11.

Functionally, one of the primary rRNA binding proteins, it binds directly to 16S rRNA where it nucleates assembly of the head domain of the 30S subunit. Is located at the subunit interface close to the decoding center, probably blocks exit of the E-site tRNA. This is Small ribosomal subunit protein uS7 from Variovorax paradoxus (strain S110).